Reading from the N-terminus, the 891-residue chain is Alanine--tRNA ligase (891 aa).

Zn(2+) contacts are provided by His-564, His-568, Cys-678, and His-682.

The protein belongs to the class-II aminoacyl-tRNA synthetase family. Zn(2+) is required as a cofactor.

It is found in the cytoplasm. It carries out the reaction tRNA(Ala) + L-alanine + ATP = L-alanyl-tRNA(Ala) + AMP + diphosphate. In terms of biological role, catalyzes the attachment of alanine to tRNA(Ala) in a two-step reaction: alanine is first activated by ATP to form Ala-AMP and then transferred to the acceptor end of tRNA(Ala). Also edits incorrectly charged Ser-tRNA(Ala) and Gly-tRNA(Ala) via its editing domain. The polypeptide is Alanine--tRNA ligase (Nitrobacter hamburgensis (strain DSM 10229 / NCIMB 13809 / X14)).